The sequence spans 580 residues: Mucolipin-1 (580 aa).

The disordered stretch occupies residues 1 to 38; that stretch reads MTDPAGPRGSETERLLTPNPGYGTQVGPSPAPPTPPEE. At 1-65 the chain is on the cytoplasmic side; that stretch reads MTDPAGPRGS…FRAKGRKPCK (65 aa). Residue S10 is modified to Phosphoserine. A Dileucine motif; mediates targeting to lysosomes motif is present at residues 11–16; the sequence is ETERLL. Residues 42–62 are interaction with phosphoinositides; it reads RRRLKYFFMSPCDKFRAKGRK. The helical transmembrane segment at 66–86 threads the bilayer; it reads LMLQVVKILVVTVQLILFGLS. Over 87-298 the chain is Extracellular; that stretch reads NQLAVTFREE…VFRHGDNSFR (212 aa). Residues 107-121 are extracellular/lumenal pore loop; sequence LGYSDGADDTFAAYT. C166 and C192 are disulfide-bonded. An N-linked (GlcNAc...) asparagine glycan is attached at N230. C253 and C284 form a disulfide bridge. The chain crosses the membrane as a helical span at residues 299-321; that stretch reads LLFDVVVILTCSLSFLLCARSLL. The Cytoplasmic portion of the chain corresponds to 322-350; it reads RGFLLQNEFVRFMWRQRRRVISLWERLEF. The helical transmembrane segment at 351-371 threads the bilayer; sequence VNGWYILLVTSDVLTISGTIM. Topologically, residues 372–382 are extracellular; the sequence is KIGIEAKNLAS. The helical transmembrane segment at 383–405 threads the bilayer; it reads YDVCSILLGTSTLLVWVGVIRYL. Topologically, residues 406–427 are cytoplasmic; that stretch reads TFFHNYNILIATLRVALPSVMR. The chain crosses the membrane as a helical span at residues 428–448; that stretch reads FCCCVAVIYLGYCFCGWIVLG. The Extracellular portion of the chain corresponds to 449-456; it reads PYHVKFRS. The pore-forming intramembrane region spans 457 to 477; sequence LSMVSECLFSLINGDDMFVTF. The short motif at 469–474 is the Selectivity filter element; the sequence is NGDDMF. Residues 478–491 are Extracellular-facing; the sequence is AAMQAQQGRSSLVW. A helical membrane pass occupies residues 492 to 513; the sequence is LFSQLYLYSFISLFIYMVLSLF. Residues 514–580 are Cytoplasmic-facing; it reads IALITGAYDT…PSEEHSLLVN (67 aa). Phosphoserine; by PAK is present on residues S557 and S559. Residues 565–567 form a required for palmitoylation and association with membranes region; sequence CCC. A Dileucine internalization motif; mediates AP2 complex-dependent internalization motif is present at residues 573 to 578; that stretch reads EEHSLL.

Belongs to the transient receptor (TC 1.A.4) family. Polycystin subfamily. MCOLN1 sub-subfamily. In terms of assembly, homotetramer. Homooligomer. Can heterooligomerize with MCOLN2 or MCOLN3; heteromeric assemblies have different channel properties as compared to the respective homooligomers and may be tissue-specific. Interacts with PDCD6. Interacts with TMEM163. Interacts with LAPTM4B. Palmitoylated; involved in association with membranes. In terms of processing, phosphorylation by PKA inhibits channel activity. Dephosphorylation increases activity. Post-translationally, proteolytically cleaved probably involving multiple lysosomal proteases including cathepsin B; inhibits lysosomal channel activity.

The protein localises to the late endosome membrane. The protein resides in the lysosome membrane. Its subcellular location is the cytoplasmic vesicle membrane. It is found in the cell projection. It localises to the phagocytic cup. The protein localises to the cytoplasmic vesicle. The protein resides in the phagosome membrane. Its subcellular location is the cell membrane. The enzyme catalyses Ca(2+)(in) = Ca(2+)(out). It catalyses the reaction Fe(2+)(in) = Fe(2+)(out). It carries out the reaction Mg(2+)(in) = Mg(2+)(out). The catalysed reaction is K(+)(in) = K(+)(out). The enzyme catalyses Na(+)(in) = Na(+)(out). Channel activity is controlled by multiple regulatory mechanisms in different subcellular compartments. Channel function is transiently modulated by changes in Ca(2+) in a pH-dependent manner; pH changes modify the aggregation state of unitary channels; a negative cooperativity between extracellular/lumenal Ca(2+) and H(+) is suggested. Regulated by phosphoinositides in a compartment-specific manner: in lysosomes activated by PtdIns(3,5)P2 (Phosphatidylinositol 3,5-bisphosphate) and at the plasma membrane inhibited by PtdIns(4,5)P2 (Phosphatidylinositol 4,5-bisphosphate). In terms of biological role, nonselective cation channel probably playing a role in the regulation of membrane trafficking events and of metal homeostasis. Acts as a Ca(2+)-permeable cation channel with inwardly rectifying activity. Proposed to play a major role in Ca(2+) release from late endosome and lysosome vesicles to the cytoplasm, which is important for many lysosome-dependent cellular events, including the fusion and trafficking of these organelles, exocytosis and autophagy. Required for efficient uptake of large particles in macrophages in which Ca(2+) release from the lysosomes triggers lysosomal exocytosis. May also play a role in phagosome-lysosome fusion. Involved in lactosylceramide trafficking indicative for a role in the regulation of late endocytic membrane fusion/fission events. By mediating lysosomal Ca(2+) release is involved in regulation of mTORC1 signaling and in mTOR/TFEB-dependent lysosomal adaptation to environmental cues such as nutrient levels. Seems to act as lysosomal active oxygen species (ROS) sensor involved in ROS-induced TFEB activation and autophagy. Also functions as a Fe(2+) permeable channel in late endosomes and lysosomes. Also permeable to Mg(2+), Na(+). K(+) and Cs(+). Proposed to play a role in zinc homeostasis probably implicating its association with TMEM163. In adaptive immunity, TRPML2 and TRPML1 may play redundant roles in the function of the specialized lysosomes of B cells. May contribute to cellular lipase activity within the late endosomal pathway or at the cell surface which may be involved in processes of membrane reshaping and vesiculation, especially the growth of tubular structures. However, it is not known, whether it conveys the enzymatic activity directly, or merely facilitates the activity of an associated phospholipase. The polypeptide is Mucolipin-1 (MCOLN1) (Macaca fascicularis (Crab-eating macaque)).